Here is a 1266-residue protein sequence, read N- to C-terminus: Neuronal-glial cell adhesion molecule (1266 aa).

Residues methionine 1–alanine 20 form the signal peptide. Topologically, residues isoleucine 21–lysine 1130 are extracellular. Ig-like C2-type domains follow at residues proline 36–alanine 128, proline 135–leucine 221, proline 236–threonine 322, proline 327–histidine 413, proline 418–glutamate 506, and proline 510–arginine 597. 4 disulfides stabilise this stretch: cysteine 58–cysteine 110, cysteine 154–cysteine 205, cysteine 260–cysteine 306, and cysteine 348–cysteine 397. N-linked (GlcNAc...) asparagine glycosylation occurs at asparagine 97. Residues asparagine 288, asparagine 390, asparagine 434, asparagine 472, and asparagine 498 are each glycosylated (N-linked (GlcNAc...) asparagine). Cysteines 441 and 490 form a disulfide. Residues cysteine 532 and cysteine 581 are joined by a disulfide bond. Fibronectin type-III domains lie at proline 603 to alanine 698, proline 700 to aspartate 804, tyrosine 809 to glycine 930, proline 934 to glutamate 1021, and proline 1022 to threonine 1118. The segment at glutamate 685–glutamate 710 is disordered. Asparagine 712 and asparagine 819 each carry an N-linked (GlcNAc...) asparagine glycan. The segment at serine 857–valine 882 is disordered. The span at proline 862–proline 881 shows a compositional bias: pro residues. The Cell attachment site signature appears at arginine 914–aspartate 916. The interval serine 1004 to proline 1025 is disordered. Asparagine 1061, asparagine 1075, asparagine 1100, and asparagine 1116 each carry an N-linked (GlcNAc...) asparagine glycan. The chain crosses the membrane as a helical span at residues glycine 1131–isoleucine 1153. Residues lysine 1154 to aspartate 1266 lie on the Cytoplasmic side of the membrane. A compositionally biased stretch (basic and acidic residues) spans valine 1163–lysine 1195. The interval valine 1163–aspartate 1266 is disordered. Residues serine 1199–glycine 1211 are compositionally biased toward gly residues.

It belongs to the immunoglobulin superfamily. L1/neurofascin/NgCAM family. As to quaternary structure, binds to itself and to axonin 1. As to expression, brain.

It is found in the cell membrane. Mediates the adhesion of neurons to neurons and neurons to glia. It is involved in neuronal migration, neurite fasciculation and outgrowth. The chain is Neuronal-glial cell adhesion molecule from Gallus gallus (Chicken).